The primary structure comprises 910 residues: Schlafen family member 8 (910 aa).

The segment at 1–354 (METHPSLAVK…WVRMMVDFGP (354 aa)) is n'-domain region. Active-site residues include glutamate 205 and glutamate 210. 3 residues coordinate Zn(2+): histidine 280, cysteine 282, and cysteine 319. 599 to 606 (GLPGSGKT) contacts ATP.

This sequence belongs to the Schlafen family. Subgroup III subfamily. Requires Mg(2+) as cofactor. In terms of tissue distribution, in T-cells, expressed at relatively constant levels during development: expressed in immature CD3(-)CD4(-)CD8(-) T-cells (DN stage), in CD4(+)CD8(+) double-positive stage (DP) and mature CD4(+) or CD8(+) thymocytes. Expression is slightly reduced at the DP stage.

Its subcellular location is the cytoplasm. Endoribonuclease that cleaves tRNAs and rRNAs. Cleaves tRNAs 11 nucleotides from the 3'-terminus at the acceptor stem. May be involved in immune system via regulation of inflammation. The chain is Schlafen family member 8 from Mus musculus (Mouse).